The primary structure comprises 121 residues: Snaclec coagulation factor IX-binding protein subunit A (121 aa).

The C-type lectin domain maps to 1–120 (YEGHCYQTFK…CGERNPFVCE (120 aa)). 2 cysteine pairs are disulfide-bonded: Cys-22–Cys-119 and Cys-94–Cys-111. Ca(2+) is bound by residues Ser-33, Glu-35, and Glu-39. Residue Glu-120 coordinates Ca(2+).

The protein belongs to the snaclec family. As to quaternary structure, heterodimer of subunits A and B; disulfide-linked. As to expression, expressed by the venom gland.

The protein resides in the secreted. In terms of biological role, anticoagulant protein which binds to the gamma-carboxyglutamic acid-domain regions of factor IX (F9) (but not factor X) in the presence of calcium with a 1 to 1 stoichiometry. The polypeptide is Snaclec coagulation factor IX-binding protein subunit A (Gloydius halys (Chinese water mocassin)).